The primary structure comprises 861 residues: Xylan 1,4-beta-xylosidase (861 aa).

Residues 1-19 (MKYQLFLSLALCVGLGASA) form the signal peptide. Residue Asp269 is the Nucleophile of the active site. Residues 458-600 (DGKKGLKGTF…DYQETIAQLK (143 aa)) enclose the PA14 domain. Residue Glu616 is the Proton donor/acceptor of the active site.

Belongs to the glycosyl hydrolase 3 family. In terms of assembly, exists as a large polymeric species, presumably as a homononamer.

The enzyme catalyses Hydrolysis of (1-&gt;4)-beta-D-xylans, to remove successive D-xylose residues from the non-reducing termini.. The catalysed reaction is Hydrolysis of terminal non-reducing alpha-L-arabinofuranoside residues in alpha-L-arabinosides.. The protein operates within glycan degradation; xylan degradation. Functionally, involved in degradation of plant cell wall polysaccharides. Has beta-xylosidase activity via its capacity to hydrolyze glycosidic linkages of beta-1,4-xylo-oligosaccharides of various lengths (X2 to X6), releasing xylose monomers. To a much lesser extent, also has alpha-L-arabinofuranosidase activity. Does not possess beta-D-glucosidase activity. Acts synergistically with Xyn10D-Fae1A to increase the release of xylose from xylan. The protein is Xylan 1,4-beta-xylosidase of Xylanibacter ruminicola (strain ATCC 19189 / DSM 19721 / CIP 105475 / JCM 8958 / 23) (Prevotella ruminicola).